A 400-amino-acid chain; its full sequence is Phosphoglycerate kinase (400 aa).

Residues aspartate 22–asparagine 24, arginine 38, histidine 61–arginine 64, arginine 119, and arginine 152 each bind substrate. ATP is bound by residues lysine 205, glycine 296, glutamate 327, and glycine 353 to threonine 356.

This sequence belongs to the phosphoglycerate kinase family. As to quaternary structure, monomer.

Its subcellular location is the cytoplasm. The enzyme catalyses (2R)-3-phosphoglycerate + ATP = (2R)-3-phospho-glyceroyl phosphate + ADP. It participates in carbohydrate degradation; glycolysis; pyruvate from D-glyceraldehyde 3-phosphate: step 2/5. The polypeptide is Phosphoglycerate kinase (Campylobacter jejuni subsp. doylei (strain ATCC BAA-1458 / RM4099 / 269.97)).